The following is a 534-amino-acid chain: Cytochrome P450 monooxygenase btcB (534 aa).

Asn20 carries N-linked (GlcNAc...) asparagine glycosylation. Residues 41–61 form a helical membrane-spanning segment; sequence ALAFLCGALLFGFVYSVFYNL. 3 N-linked (GlcNAc...) asparagine glycosylation sites follow: Asn335, Asn413, and Asn431. Heme is bound at residue Cys484.

This sequence belongs to the cytochrome P450 family. Heme is required as a cofactor.

The protein resides in the membrane. It functions in the pathway secondary metabolite biosynthesis; terpenoid biosynthesis. Functionally, cytochrome P4590 monooxygenase part of the gene cluster that mediates the biosynthesis of betaestacins. The bifunctional terpene synthase btcA converts isopentenyl diphosphate (IPP) and dimethylallyl diphosphate (DMAPP) into the sesterterpene betaestacin I. The C-terminal prenyltransferase (PT) domain of btcA catalyzes formation of GFPP, whereas the N-terminal terpene cyclase (TC) domain catalyzes the cyclization of GFPP into betaestacin I. The cytochrome P450 monooxygenase btcB oxidizes the C25 methyl group of betaestacin I to yield the carboxylic acid betaestacin IV via the alcohol betaestacin III. The cytochrome P450 monooxygenase btcC further catalyzes the multistep oxidation of betaestacin IV to produce several compounds, including betaestacins Va, Vb, Vc and VI. The chain is Cytochrome P450 monooxygenase btcB from Colletotrichum orbiculare (strain 104-T / ATCC 96160 / CBS 514.97 / LARS 414 / MAFF 240422) (Cucumber anthracnose fungus).